A 90-amino-acid polypeptide reads, in one-letter code: MALDSAKKAEIVAKFAKKPGDTGSTEVQVALLTARIAELTEHLKIYKKDFSSRLGLLKLVGQRKRLLSYLKRKDYNSYSKLITELNLRDK.

Belongs to the universal ribosomal protein uS15 family. As to quaternary structure, part of the 30S ribosomal subunit. Forms a bridge to the 50S subunit in the 70S ribosome, contacting the 23S rRNA.

One of the primary rRNA binding proteins, it binds directly to 16S rRNA where it helps nucleate assembly of the platform of the 30S subunit by binding and bridging several RNA helices of the 16S rRNA. Its function is as follows. Forms an intersubunit bridge (bridge B4) with the 23S rRNA of the 50S subunit in the ribosome. The sequence is that of Small ribosomal subunit protein uS15 from Campylobacter jejuni subsp. jejuni serotype O:6 (strain 81116 / NCTC 11828).